The chain runs to 1320 residues: MDFISASSLSSPFSTQLSPIYLSSGIVSLKPRHRVKNRNFGSRESNNKSRKIVPIRGCFGFSGSFLRSKQSDYGSEAVSESLRLCGEGNELVLSSEYNSAKTRESVIQFVTKPLVYALFCIAIGLSPIRSFQAPALAVPFVSDVIWKKKKERVREKEVVLKAVDHEFSDYTRRLLETVSVLLKTIEIVRKENGEVAEVGAALDAVKVEKEKLQKEIMSGLYRDMRRLRKERDLLMKRADKIVDEALSLKKQSEKLLRKGAREKMEKLEESVDIMESEYNKIWERIDEIDDIILKKETTTLSFGVRELIFIERECVELVKSFNRELNQKSFESVPESSITKLSRSEIKQELVNAQRKHLEQMILPNVLELEEVDPFFDRDSVDFSLRIKKRLEESKKLQRDLQNRIRKRMKKFGEEKLFVQKTPEGEAVKGFPEAEVKWMFGEKEVVVPKAIQLHLRHGWKKWQEEAKADLKQKLLEDVDFGKQYIAQRQEQVLLDRDRVVSKTWYNEDKSRWEMDPMAVPYAVSRKLIDSARIRHDYAVMYVALKGDDKEFYVDIKEYEMLFEKFGGFDALYLKMLACGIPTSVHLMWIPMSELSLQQQFLLVTRVVSRVFNALRKTQVVSNAKDTVLEKIRNINDDIMMAVVFPVIEFIIPYQLRLRLGMAWPEEIEQTVGSTWYLQWQSEAEMNFKSRNTEDFQWFLWFLIRSSIYGFVLYHVFRFLKRKVPRLLGYGPFRRDPNVRKFWRVKSYFTYRKRRIKQKRKAGIDPIKTAFDRMKRVKNPPIPLKNFASIESMREEINEVVAFLQNPKAFQEMGARAPRGVLIVGERGTGKTSLALAIAAEARVPVVNVEAQELEAGLWVGQSAANVRELFQTARDLAPVIIFVEDFDLFAGVRGKFVHTKQQDHESFINQLLVELDGFEKQDGVVLMATTRNHKQIDEALRRPGRMDRVFHLQSPTEMERERILHNAAEETMDRELVDLVDWRKVSEKTTLLRPIELKLVPMALESSAFRSKFLDTDELLSYVSWFATFSHIVPPWLRKTKVAKTMGKMLVNHLGLNLTKDDLENVVDLMEPYGQISNGIELLNPTVDWTRETKFPHAVWAAGRALITLLIPNFDVVENLWLEPSSWEGIGCTKITKVTSGGSAIGNTESRSYLEKKLVFCFGSHIASQMLLPPGDENFLSSSEITKAQEIATRMVLQYGWGPDDSPAVYYATNAVSALSMGNNHEYEMAGKVEKIYDLAYEKAKGMLLKNRRVLEKITEELLEFEILTHKDLERIVHENGGIREKEPFFLSGTNYNEALSRSFLDVGDPPETALLSAPT.

A chloroplast-targeting transit peptide spans 1-43; it reads MDFISASSLSSPFSTQLSPIYLSSGIVSLKPRHRVKNRNFGSR. A run of 3 helical transmembrane segments spans residues 571–591, 633–653, and 695–715; these read LYLK…WIPM, NIND…IIPY, and FQWF…LYHV. 824-831 contacts ATP; sequence GERGTGKT.

It in the N-terminal section; belongs to the AAA ATPase family. In the C-terminal section; belongs to the peptidase M41 family. In terms of assembly, oligomer.

The protein resides in the plastid. The protein localises to the chloroplast membrane. Functionally, required for plastid development during embryogenesis. Might be involved in chaperone functions or play a structural role in the thylakoid FtsH complex. The protein is Probable inactive ATP-dependent zinc metalloprotease FTSHI 5, chloroplastic of Arabidopsis thaliana (Mouse-ear cress).